The sequence spans 244 residues: Probable transcriptional regulatory protein CBU_1566 (244 aa).

Belongs to the TACO1 family.

The protein localises to the cytoplasm. This is Probable transcriptional regulatory protein CBU_1566 from Coxiella burnetii (strain RSA 493 / Nine Mile phase I).